Consider the following 262-residue polypeptide: Glucosamine-6-phosphate deaminase (262 aa).

The Proton acceptor; for enolization step role is filled by D63. N129 serves as the catalytic For ring-opening step. The Proton acceptor; for ring-opening step role is filled by H131. E136 functions as the For ring-opening step in the catalytic mechanism.

This sequence belongs to the glucosamine/galactosamine-6-phosphate isomerase family. NagB subfamily.

It catalyses the reaction alpha-D-glucosamine 6-phosphate + H2O = beta-D-fructose 6-phosphate + NH4(+). The protein operates within amino-sugar metabolism; N-acetylneuraminate degradation; D-fructose 6-phosphate from N-acetylneuraminate: step 5/5. Its function is as follows. Catalyzes the reversible isomerization-deamination of glucosamine 6-phosphate (GlcN6P) to form fructose 6-phosphate (Fru6P) and ammonium ion. This is Glucosamine-6-phosphate deaminase from Bacillus cereus (strain G9842).